The chain runs to 513 residues: GMP synthase [glutamine-hydrolyzing] (513 aa).

Residues 3-200 enclose the Glutamine amidotransferase type-1 domain; that stretch reads SVTVLDFGSQ…LIDIAGIKPD (198 aa). Cysteine 80 (nucleophile) is an active-site residue. Residues histidine 174 and glutamate 176 contribute to the active site. Residues 201 to 388 form the GMPS ATP-PPase domain; that stretch reads WSPKSFIGHQ…LGIAEDILMR (188 aa). ATP is bound at residue 228 to 234; the sequence is SGGVDST.

Homodimer.

The catalysed reaction is XMP + L-glutamine + ATP + H2O = GMP + L-glutamate + AMP + diphosphate + 2 H(+). It participates in purine metabolism; GMP biosynthesis; GMP from XMP (L-Gln route): step 1/1. Its function is as follows. Catalyzes the synthesis of GMP from XMP. This chain is GMP synthase [glutamine-hydrolyzing], found in Chlorobium phaeobacteroides (strain DSM 266 / SMG 266 / 2430).